The following is a 164-amino-acid chain: Lipoprotein signal peptidase (164 aa).

The next 3 helical transmembrane spans lie at Phe12–Ala32, Trp70–Thr90, and Gln93–Phe113. Catalysis depends on residues Asp123 and Asp141. A helical transmembrane segment spans residues Tyr133 to Ile153.

This sequence belongs to the peptidase A8 family.

It is found in the cell inner membrane. The catalysed reaction is Release of signal peptides from bacterial membrane prolipoproteins. Hydrolyzes -Xaa-Yaa-Zaa-|-(S,diacylglyceryl)Cys-, in which Xaa is hydrophobic (preferably Leu), and Yaa (Ala or Ser) and Zaa (Gly or Ala) have small, neutral side chains.. The protein operates within protein modification; lipoprotein biosynthesis (signal peptide cleavage). In terms of biological role, this protein specifically catalyzes the removal of signal peptides from prolipoproteins. The sequence is that of Lipoprotein signal peptidase from Pseudoalteromonas atlantica (strain T6c / ATCC BAA-1087).